Here is a 438-residue protein sequence, read N- to C-terminus: GRAS family protein TF80 (438 aa).

In terms of domain architecture, GRAS spans 13 to 436; sequence LRYDSHGSNP…RPLFSVSAWK (424 aa). The leucine repeat I (LRI) stretch occupies residues 20 to 81; it reads SNPMIPLIEC…YKIVKHLPGV (62 aa). The interval 100 to 165 is VHIID; it reads QKYFYDLCPF…GGPPFLKITG (66 aa). The VHIID signature appears at 131 to 135; the sequence is VHIID. Residues 175-207 are leucine repeat II (LRII); sequence QMSFHLTTEAGILDFPLQFNPIISKLEDVDFEN. The tract at residues 216–359 is PFYRE; sequence VAISSVLQLH…SMLLGEQIKN (144 aa). Positions 224–228 match the LXXLL motif motif; the sequence is LHSLL. The interval 362 to 436 is SAW; that stretch reads TCEGVDRKER…RPLFSVSAWK (75 aa).

Belongs to the GRAS family. In terms of assembly, interacts with RAM1.

Its subcellular location is the nucleus. The polypeptide is GRAS family protein TF80 (TF80) (Medicago truncatula (Barrel medic)).